Reading from the N-terminus, the 475-residue chain is CAAX prenyl protease 1 homolog (475 aa).

At 1 to 18 the chain is on the lumenal side; sequence MGMWASVDAMWDFPAEKR. A helical transmembrane segment spans residues 19 to 39; it reads IFGAVLLFSWTVYLWETFLAQ. The Nuclear portion of the chain corresponds to 40–81; it reads RQRRIYKTTTRVPAELEQIMDSDTFEKSRLYQLDKSTFSFWS. A helical transmembrane segment spans residues 82 to 102; the sequence is GLYSEVEGTFILLFGGIPYLW. The Lumenal segment spans residues 103–123; it reads RLSGQFCSSAGFGPEYEIIQS. The helical transmembrane segment at 124-144 threads the bilayer; sequence LVFLLLATLFSALTGLPWSLY. At 145-170 the chain is on the nuclear side; sequence NTFVIEEKHGFNHQTLEFFMKDAIKK. A helical transmembrane segment spans residues 171 to 191; the sequence is FIVTQCILLPVSALLLYIIKI. Over 192–195 the chain is Lumenal; it reads GGDY. Residues 196–216 form a helical membrane-spanning segment; it reads FFIYAWLFTLVVSLVLVTIYA. Topologically, residues 217 to 347 are nuclear; the sequence is DYIAPLFDKF…GHWKLGHTVK (131 aa). The disordered stretch occupies residues 293 to 314; sequence DNQEESGMEARNEGEGDSEEVK. Residues 300–314 are compositionally biased toward basic and acidic residues; sequence MEARNEGEGDSEEVK. Residue His335 participates in Zn(2+) binding. Glu336 is an active-site residue. His339 is a binding site for Zn(2+). Residues 348–368 form a helical membrane-spanning segment; the sequence is NIIISQMNSFLCFFLFAVLIG. The Lumenal segment spans residues 369–382; sequence RRELFAAFGFYDSQ. Residues 383 to 405 form a helical membrane-spanning segment; sequence PTLIGLLIIFQFIFSPYNEVLSF. Topologically, residues 406 to 475 are nuclear; sequence CLTVLSRRFE…LQALKNAKQD (70 aa). Glu415 serves as a coordination point for Zn(2+).

This sequence belongs to the peptidase M48A family. Requires Zn(2+) as cofactor.

It is found in the endoplasmic reticulum membrane. Its subcellular location is the nucleus inner membrane. It localises to the early endosome membrane. The protein localises to the late endosome membrane. The catalysed reaction is Hydrolyzes the peptide bond -P2-(S-farnesyl or geranylgeranyl)C-P1'-P2'-P3'-COOH where P1' and P2' are amino acids with aliphatic side chains and P3' is any C-terminal residue.. Its activity is regulated as follows. Inhibited by HIV protease inhibitors, such as lopinavir, tipranavir and nelfinavir, leading to defects in lamin A/LMNA maturation and accumulation of prelamin-A/C precursors in cells. This causes defects in nuclear envelope integrity and release of DNA in the cytosol, activating the AIM2 inflammasome. Its function is as follows. Transmembrane metalloprotease whose catalytic activity is critical for processing lamin A/LMNA on the inner nuclear membrane and clearing clogged translocons on the endoplasmic reticulum. Proteolytically removes the C-terminal three residues of farnesylated proteins. Also plays an antiviral role independently of its protease activity by restricting enveloped RNA and DNA viruses. Mechanistically, controls IFITM antiviral pathway to hinder viruses from breaching the endosomal barrier by modulating membrane fluidity. In Mus musculus (Mouse), this protein is CAAX prenyl protease 1 homolog.